A 335-amino-acid polypeptide reads, in one-letter code: Urokinase plasminogen activator surface receptor (335 aa).

The first 22 residues, 1-22 (MGHPLLLPLLLLLHTCVPASWG), serve as a signal peptide directing secretion. UPAR/Ly6 domains are found at residues 23–114 (LRCM…RSRY), 115–213 (LECI…PQNG), and 214–305 (HQCY…YRKG). 3 disulfide bridges follow: Cys-25–Cys-46, Cys-28–Cys-34, and Cys-39–Cys-67. A glycan (N-linked (GlcNAc...) asparagine) is linked at Asn-74. 11 disulfide bridges follow: Cys-93/Cys-98, Cys-117/Cys-144, Cys-120/Cys-127, Cys-137/Cys-169, Cys-175/Cys-192, Cys-193/Cys-198, Cys-216/Cys-244, Cys-219/Cys-227, Cys-237/Cys-263, Cys-269/Cys-287, and Cys-288/Cys-293. Residues Asn-184, Asn-194, Asn-222, and Asn-255 are each glycosylated (N-linked (GlcNAc...) asparagine). Gly-305 carries GPI-anchor amidated glycine lipidation. Positions 306 to 335 (AAPQPGPAHLSLTITLLMTARLWGGTLLWT) are cleaved as a propeptide — removed in mature form.

In terms of assembly, monomer. Interacts (via the UPAR/Ly6 domains) with SRPX2. Interacts with MRC2. Interacts with FAP (seprase); the interaction occurs at the cell surface of invadopodia membrane. Interacts with SORL1 (via N-terminal ectodomain); this interaction decreases PLAUR internalization. The ternary complex composed of PLAUR-PLAU-SERPINE1 also interacts with SORL1.

It localises to the cell membrane. The protein resides in the cell projection. The protein localises to the invadopodium membrane. Acts as a receptor for urokinase plasminogen activator. Plays a role in localizing and promoting plasmin formation. Mediates the proteolysis-independent signal transduction activation effects of U-PA. It is subject to negative-feedback regulation by U-PA which cleaves it into an inactive form. The protein is Urokinase plasminogen activator surface receptor (PLAUR) of Chlorocebus aethiops (Green monkey).